Reading from the N-terminus, the 269-residue chain is Ribosomal RNA small subunit methyltransferase A (269 aa).

S-adenosyl-L-methionine-binding residues include N18, L20, G45, E66, D91, and N112.

This sequence belongs to the class I-like SAM-binding methyltransferase superfamily. rRNA adenine N(6)-methyltransferase family. RsmA subfamily.

It is found in the cytoplasm. The enzyme catalyses adenosine(1518)/adenosine(1519) in 16S rRNA + 4 S-adenosyl-L-methionine = N(6)-dimethyladenosine(1518)/N(6)-dimethyladenosine(1519) in 16S rRNA + 4 S-adenosyl-L-homocysteine + 4 H(+). Its function is as follows. Specifically dimethylates two adjacent adenosines (A1518 and A1519) in the loop of a conserved hairpin near the 3'-end of 16S rRNA in the 30S particle. May play a critical role in biogenesis of 30S subunits. This Shewanella loihica (strain ATCC BAA-1088 / PV-4) protein is Ribosomal RNA small subunit methyltransferase A.